Consider the following 141-residue polypeptide: Cytochrome c-type biogenesis protein CcmE (141 aa).

Over 1-7 (MQRKHKR) the chain is Cytoplasmic. A helical; Signal-anchor for type II membrane protein membrane pass occupies residues 8–28 (ILFVAVSFIALGCVSAFVLFE). At 29 to 141 (LSKSISFFCT…SSDAAVIGSS (113 aa)) the chain is on the periplasmic side. Heme contacts are provided by His-121 and Tyr-125.

The protein belongs to the CcmE/CycJ family.

It localises to the cell inner membrane. Functionally, heme chaperone required for the biogenesis of c-type cytochromes. Transiently binds heme delivered by CcmC and transfers the heme to apo-cytochromes in a process facilitated by CcmF and CcmH. This is Cytochrome c-type biogenesis protein CcmE from Anaplasma phagocytophilum (strain HZ).